We begin with the raw amino-acid sequence, 165 residues long: RxLR effector protein PITG_09218 (165 aa).

Residues 1–24 (MRFSAFLTLLLVAFVASCSTFASA) form the signal peptide. The short motif at 31-57 (RRLRADAAPVPVNKDNVAKLAGGFLEK) is the RxLR-dEER element. Residues 129-149 (VTLGATVAGFAIYGAYKALFD) form a helical membrane-spanning segment.

The protein belongs to the RxLR effector family.

Its subcellular location is the secreted. It is found in the host mitochondrion membrane. It localises to the host endoplasmic reticulum membrane. Effector that enhances P.infestans colonization of Nicotiana benthamiana leaves. The sequence is that of RxLR effector protein PITG_09218 from Phytophthora infestans (strain T30-4) (Potato late blight agent).